A 178-amino-acid polypeptide reads, in one-letter code: Ribulose bisphosphate carboxylase small subunit, chloroplastic 1 (178 aa).

The N-terminal 54 residues, 1–54 (MASSMISSPAVTTVNRAGAGMVAPFTGLKSMAGFPTRKTNNDITSIASNGGRVQ), are a transit peptide targeting the chloroplast.

The protein belongs to the RuBisCO small chain family. In terms of assembly, heterohexadecamer of 8 large and 8 small subunits.

It is found in the plastid. The protein localises to the chloroplast. RuBisCO catalyzes two reactions: the carboxylation of D-ribulose 1,5-bisphosphate, the primary event in carbon dioxide fixation, as well as the oxidative fragmentation of the pentose substrate. Both reactions occur simultaneously and in competition at the same active site. Although the small subunit is not catalytic it is essential for maximal activity. The sequence is that of Ribulose bisphosphate carboxylase small subunit, chloroplastic 1 from Glycine max (Soybean).